The sequence spans 118 residues: Small ribosomal subunit protein uS13 (118 aa).

Residues 99 to 118 (GQRTRTNARTRKGPRKAIKK) are disordered.

Belongs to the universal ribosomal protein uS13 family. Part of the 30S ribosomal subunit. Forms a loose heterodimer with protein S19. Forms two bridges to the 50S subunit in the 70S ribosome.

Located at the top of the head of the 30S subunit, it contacts several helices of the 16S rRNA. In the 70S ribosome it contacts the 23S rRNA (bridge B1a) and protein L5 of the 50S subunit (bridge B1b), connecting the 2 subunits; these bridges are implicated in subunit movement. Contacts the tRNAs in the A and P-sites. This Xylella fastidiosa (strain M12) protein is Small ribosomal subunit protein uS13.